The following is a 290-amino-acid chain: Phosphatidylserine decarboxylase proenzyme (290 aa).

Residues Asp96, His153, and Ser257 each act as charge relay system; for autoendoproteolytic cleavage activity in the active site. Catalysis depends on Ser257, which acts as the Schiff-base intermediate with substrate; via pyruvic acid; for decarboxylase activity. Ser257 carries the post-translational modification Pyruvic acid (Ser); by autocatalysis.

This sequence belongs to the phosphatidylserine decarboxylase family. PSD-B subfamily. Prokaryotic type I sub-subfamily. Heterodimer of a large membrane-associated beta subunit and a small pyruvoyl-containing alpha subunit. Requires pyruvate as cofactor. Is synthesized initially as an inactive proenzyme. Formation of the active enzyme involves a self-maturation process in which the active site pyruvoyl group is generated from an internal serine residue via an autocatalytic post-translational modification. Two non-identical subunits are generated from the proenzyme in this reaction, and the pyruvate is formed at the N-terminus of the alpha chain, which is derived from the carboxyl end of the proenzyme. The autoendoproteolytic cleavage occurs by a canonical serine protease mechanism, in which the side chain hydroxyl group of the serine supplies its oxygen atom to form the C-terminus of the beta chain, while the remainder of the serine residue undergoes an oxidative deamination to produce ammonia and the pyruvoyl prosthetic group on the alpha chain. During this reaction, the Ser that is part of the protease active site of the proenzyme becomes the pyruvoyl prosthetic group, which constitutes an essential element of the active site of the mature decarboxylase.

Its subcellular location is the cell membrane. The enzyme catalyses a 1,2-diacyl-sn-glycero-3-phospho-L-serine + H(+) = a 1,2-diacyl-sn-glycero-3-phosphoethanolamine + CO2. Its pathway is phospholipid metabolism; phosphatidylethanolamine biosynthesis; phosphatidylethanolamine from CDP-diacylglycerol: step 2/2. Functionally, catalyzes the formation of phosphatidylethanolamine (PtdEtn) from phosphatidylserine (PtdSer). This Haemophilus influenzae (strain 86-028NP) protein is Phosphatidylserine decarboxylase proenzyme.